A 213-amino-acid chain; its full sequence is Redox-sensing transcriptional repressor Rex (213 aa).

The segment at residues 18 to 57 (LYYRFLKNLHASGKQRVSSAELSEAVKVDPATIRRDFSYF) is a DNA-binding region (H-T-H motif). An NAD(+)-binding site is contributed by 92-97 (GVGNLG).

Belongs to the transcriptional regulatory Rex family. In terms of assembly, homodimer.

The protein localises to the cytoplasm. Modulates transcription in response to changes in cellular NADH/NAD(+) redox state. This is Redox-sensing transcriptional repressor Rex from Geobacillus kaustophilus (strain HTA426).